The following is a 151-amino-acid chain: MTTDTHTLHIEEILELLPHRFPFLLVDRVLDFEKGKFLRAVKNVSFNEPFFQGHFPGKPIFPGVLILEAMAQATGILAFKSAGKLAPGELYYFAAIDEARFKRPVQPGDQMILEVEFIKERRGVARFKGVAKVDGEVACEASMMCARRREA.

His54 is an active-site residue.

This sequence belongs to the thioester dehydratase family. FabZ subfamily.

The protein resides in the cytoplasm. It carries out the reaction a (3R)-hydroxyacyl-[ACP] = a (2E)-enoyl-[ACP] + H2O. Involved in unsaturated fatty acids biosynthesis. Catalyzes the dehydration of short chain beta-hydroxyacyl-ACPs and long chain saturated and unsaturated beta-hydroxyacyl-ACPs. The chain is 3-hydroxyacyl-[acyl-carrier-protein] dehydratase FabZ from Sodalis glossinidius (strain morsitans).